Consider the following 279-residue polypeptide: Tryptophan synthase alpha chain (279 aa).

Active-site proton acceptor residues include Glu50 and Asp61.

Belongs to the TrpA family. In terms of assembly, tetramer of two alpha and two beta chains.

It carries out the reaction (1S,2R)-1-C-(indol-3-yl)glycerol 3-phosphate + L-serine = D-glyceraldehyde 3-phosphate + L-tryptophan + H2O. It participates in amino-acid biosynthesis; L-tryptophan biosynthesis; L-tryptophan from chorismate: step 5/5. In terms of biological role, the alpha subunit is responsible for the aldol cleavage of indoleglycerol phosphate to indole and glyceraldehyde 3-phosphate. The chain is Tryptophan synthase alpha chain from Brucella suis (strain ATCC 23445 / NCTC 10510).